The sequence spans 451 residues: Chromosomal replication initiator protein DnaA (451 aa).

Positions 1–77 (MTENEQIFWN…EVYNAQISVD (77 aa)) are domain I, interacts with DnaA modulators. The segment at 77–110 (DYVFEEDLMIEQNQTKINQKPKQQALNSLPTVTS) is domain II. The domain III, AAA+ region stretch occupies residues 111-329 (DLNSKYSFEN…GALKDISLVA (219 aa)). ATP is bound by residues Gly155, Gly157, Lys158, and Thr159. The interval 330–451 (NFKQIDTITV…EIETIKNKIK (122 aa)) is domain IV, binds dsDNA.

It belongs to the DnaA family. Oligomerizes as a right-handed, spiral filament on DNA at oriC.

It is found in the cytoplasm. Functionally, plays an essential role in the initiation and regulation of chromosomal replication. ATP-DnaA binds to the origin of replication (oriC) to initiate formation of the DNA replication initiation complex once per cell cycle. Binds the DnaA box (a 9 base pair repeat at the origin) and separates the double-stranded (ds)DNA. Forms a right-handed helical filament on oriC DNA; dsDNA binds to the exterior of the filament while single-stranded (ss)DNA is stabiized in the filament's interior. The ATP-DnaA-oriC complex binds and stabilizes one strand of the AT-rich DNA unwinding element (DUE), permitting loading of DNA polymerase. After initiation quickly degrades to an ADP-DnaA complex that is not apt for DNA replication. Binds acidic phospholipids. The half-life of ATP-DnaA is 12 minutes at 37 degrees Celsius, in E.coli the half-life is about 41 minutes. The polypeptide is Chromosomal replication initiator protein DnaA (Streptococcus pyogenes serotype M1).